The chain runs to 385 residues: 3-dehydroquinate synthase (385 aa).

Residues 122-126 (GVIGD), 146-147 (TT), Lys-159, and Lys-168 each bind NAD(+). Zn(2+) contacts are provided by Glu-201, His-264, and His-282.

The protein belongs to the sugar phosphate cyclases superfamily. Dehydroquinate synthase family. Co(2+) is required as a cofactor. It depends on Zn(2+) as a cofactor. The cofactor is NAD(+).

Its subcellular location is the cytoplasm. The catalysed reaction is 7-phospho-2-dehydro-3-deoxy-D-arabino-heptonate = 3-dehydroquinate + phosphate. It functions in the pathway metabolic intermediate biosynthesis; chorismate biosynthesis; chorismate from D-erythrose 4-phosphate and phosphoenolpyruvate: step 2/7. Catalyzes the conversion of 3-deoxy-D-arabino-heptulosonate 7-phosphate (DAHP) to dehydroquinate (DHQ). The protein is 3-dehydroquinate synthase of Rhodospirillum rubrum (strain ATCC 11170 / ATH 1.1.1 / DSM 467 / LMG 4362 / NCIMB 8255 / S1).